The primary structure comprises 178 residues: Methylmalonyl-CoA epimerase, mitochondrial (178 aa).

The N-terminal 38 residues, 1 to 38 (MRRVVKAAALAAGATGLFSRVQTSVAIGRSFSTPQSQF), are a transit peptide targeting the mitochondrion. One can recognise a VOC domain in the interval 49–178 (RLNHVAVAVP…GGVLVELEQA (130 aa)). Residue histidine 52 coordinates Co(2+). Lysine 116 bears the N6-succinyllysine mark. Histidine 124 provides a ligand contact to Co(2+). Position 152 is an N6-acetyllysine; alternate (lysine 152). An N6-succinyllysine; alternate modification is found at lysine 152. Position 174 (glutamate 174) interacts with Co(2+).

The protein belongs to the methylmalonyl-CoA epimerase family.

It is found in the mitochondrion. It carries out the reaction (R)-methylmalonyl-CoA = (S)-methylmalonyl-CoA. Functionally, methylmalonyl-CoA epimerase involved in propionyl-CoA metabolism. The chain is Methylmalonyl-CoA epimerase, mitochondrial from Mus musculus (Mouse).